A 656-amino-acid polypeptide reads, in one-letter code: uncharacterized protein (656 aa).

The next 3 helical transmembrane spans lie at 7-27 (QQVL…LNHL), 40-60 (LMAM…FWTL), and 210-230 (AVFI…AFTI). The 50-residue stretch at 231 to 280 (TRPIRELLTGVKNIASGDFYQRIDLPFGGELGALIFNFNEMAERLEKYEQ) folds into the HAMP domain. One can recognise a PAS domain in the interval 289–359 (EKAKLETLVS…PILNDIIRKN (71 aa)). Residues 424–654 (NVSHELRTPL…CFFFDLMIAK (231 aa)) enclose the Histidine kinase domain. Histidine 427 carries the phosphohistidine; by autocatalysis modification.

The protein localises to the plastid. It is found in the chloroplast membrane. The enzyme catalyses ATP + protein L-histidine = ADP + protein N-phospho-L-histidine.. This is an uncharacterized protein from Porphyra purpurea (Red seaweed).